Here is a 1072-residue protein sequence, read N- to C-terminus: DNA-directed RNA polymerase subunit beta (1072 aa).

This sequence belongs to the RNA polymerase beta chain family. As to quaternary structure, in plastids the minimal PEP RNA polymerase catalytic core is composed of four subunits: alpha, beta, beta', and beta''. When a (nuclear-encoded) sigma factor is associated with the core the holoenzyme is formed, which can initiate transcription.

Its subcellular location is the plastid. The protein resides in the chloroplast. The catalysed reaction is RNA(n) + a ribonucleoside 5'-triphosphate = RNA(n+1) + diphosphate. Its function is as follows. DNA-dependent RNA polymerase catalyzes the transcription of DNA into RNA using the four ribonucleoside triphosphates as substrates. This is DNA-directed RNA polymerase subunit beta from Crucihimalaya wallichii (Rock-cress).